We begin with the raw amino-acid sequence, 230 residues long: Ribonuclease HII (230 aa).

Residues 28–217 enclose the RNase H type-2 domain; sequence FRIAGIDEAG…VKEHLPSQPD (190 aa). The a divalent metal cation site is built by Asp34, Glu35, and Asp126. The tract at residues 211 to 230 is disordered; it reads HLPSQPDCDTAGPSTGLFSF.

Belongs to the RNase HII family. It depends on Mn(2+) as a cofactor. Mg(2+) serves as cofactor.

The protein localises to the cytoplasm. The catalysed reaction is Endonucleolytic cleavage to 5'-phosphomonoester.. In terms of biological role, endonuclease that specifically degrades the RNA of RNA-DNA hybrids. In Geobacter sp. (strain M21), this protein is Ribonuclease HII.